The primary structure comprises 133 residues: UPF0344 protein SE_0666 (133 aa).

A run of 4 helical transmembrane segments spans residues 1–21, 42–62, 71–91, and 103–123; these read MLHV…ATYL, LFML…FMAA, MLLT…EISI, and FFWI…ILPW.

This sequence belongs to the UPF0344 family.

Its subcellular location is the cell membrane. The sequence is that of UPF0344 protein SE_0666 from Staphylococcus epidermidis (strain ATCC 12228 / FDA PCI 1200).